The following is a 125-amino-acid chain: Holo-[acyl-carrier-protein] synthase (125 aa).

Residues Asp8 and Glu57 each contribute to the Mg(2+) site.

It belongs to the P-Pant transferase superfamily. AcpS family. Requires Mg(2+) as cofactor.

The protein localises to the cytoplasm. The catalysed reaction is apo-[ACP] + CoA = holo-[ACP] + adenosine 3',5'-bisphosphate + H(+). Transfers the 4'-phosphopantetheine moiety from coenzyme A to a Ser of acyl-carrier-protein. This is Holo-[acyl-carrier-protein] synthase from Blochmanniella floridana.